The chain runs to 274 residues: NH(3)-dependent NAD(+) synthetase (274 aa).

Position 46 to 53 (G46 to S53) interacts with ATP. D52 serves as a coordination point for Mg(2+). Position 140 (R140) interacts with deamido-NAD(+). T160 is a binding site for ATP. E165 is a binding site for Mg(2+). Residues K173 and D180 each contribute to the deamido-NAD(+) site. Positions 189 and 211 each coordinate ATP. Residue H260 to K261 coordinates deamido-NAD(+).

Belongs to the NAD synthetase family. As to quaternary structure, homodimer.

It catalyses the reaction deamido-NAD(+) + NH4(+) + ATP = AMP + diphosphate + NAD(+) + H(+). The protein operates within cofactor biosynthesis; NAD(+) biosynthesis; NAD(+) from deamido-NAD(+) (ammonia route): step 1/1. Catalyzes the ATP-dependent amidation of deamido-NAD to form NAD. Uses ammonia as a nitrogen source. The protein is NH(3)-dependent NAD(+) synthetase of Streptococcus uberis (strain ATCC BAA-854 / 0140J).